The primary structure comprises 29 residues: Glucagon (29 aa).

The protein belongs to the glucagon family.

It is found in the secreted. Promotes hydrolysis of glycogen and lipids, and raises the blood sugar level. This Thunnus obesus (Bigeye tuna) protein is Glucagon (gcg).